The sequence spans 477 residues: MLCATVSGPSFCEAKQQILKSLHLVDIIELRLDLINELDDQELHTLITTAQNPILTFRQHKEMSTALWIQKLYSLAKLEPKWMDIDVSLPKTALQTIRKSHPKIKLILSYHTDKNEDLDAIYNEMLATPAEIYKIVLSPENSSEALNYIKKARLLPKPSTVLCMGTHGLPSRVLSPLISNAMNYAAGISAPQVAPGQPKLEELLSYNYSKLSEKSHIYGLIGDPVDRSISHLSHNFLLSKLSLNATYIKFPVTIGEVVTFFSAIRDLPFSGLSVTMPLKTAIFDHVDALDASAQLCESINTLVFRNQKILGYNTDGEGVAKLLKQKNISVNNKHIAIVGAGGAAKAIAATLAMQGANLHIFNRTLSSAAALATCCKGKAYPLGSLENFKTIDIIINCLPPEVTFPWRFPPIVMDINTKPHPSPYLERAQKHGSLIIHGYEMFIEQALLQFALWFPDFLTPESCDSFRNYVKNFMAKV.

Residues 1–209 (MLCATVSGPS…LEELLSYNYS (209 aa)) form a 3-dehydroquinate dehydratase region. 3-dehydroquinate-binding positions include S21, 29-31 (ELR), and 56-58 (TFR). H111 acts as the Proton donor/acceptor; for 3-dehydroquinate dehydratase activity in catalysis. Residue K134 is the Schiff-base intermediate with substrate; for 3-dehydroquinate dehydratase activity of the active site. The 3-dehydroquinate site is built by R172 and Q197. The interval 210 to 477 (KLSEKSHIYG…NYVKNFMAKV (268 aa)) is shikimate 5-dehydrogenase. 228–230 (SIS) contributes to the shikimate binding site. The active-site Proton acceptor; for shikimate dehydrogenase activity is K279. Shikimate contacts are provided by N300 and D315. Residues 339–343 (GAGGA), 362–364 (NRT), and G438 contribute to the NADP(+) site. Q445 contributes to the shikimate binding site.

This sequence in the N-terminal section; belongs to the type-I 3-dehydroquinase family. It in the C-terminal section; belongs to the shikimate dehydrogenase family.

It catalyses the reaction 3-dehydroquinate = 3-dehydroshikimate + H2O. The enzyme catalyses shikimate + NADP(+) = 3-dehydroshikimate + NADPH + H(+). Its pathway is metabolic intermediate biosynthesis; chorismate biosynthesis; chorismate from D-erythrose 4-phosphate and phosphoenolpyruvate: step 3/7. The protein operates within metabolic intermediate biosynthesis; chorismate biosynthesis; chorismate from D-erythrose 4-phosphate and phosphoenolpyruvate: step 4/7. In terms of biological role, bifunctional enzyme that catalyzes two sequential steps of the aromatic amino acids biosynthetic pathway. In the first reaction, the AroD domain catalyzes the cis-dehydration of 3-dehydroquinate (DHQ) and introduces the first double bond of the aromatic ring to yield 3-dehydroshikimate; in the second reaction, the AroE domain catalyzes the reversible NADPH linked reduction of 3-dehydroshikimate (DHSA) to yield shikimate (SA). This Chlamydia pneumoniae (Chlamydophila pneumoniae) protein is Shikimate biosynthesis protein AroDE.